Reading from the N-terminus, the 340-residue chain is GTPase Obg (340 aa).

The 158-residue stretch at Met1–Ile158 folds into the Obg domain. The OBG-type G domain occupies Ser159–Lys325. GTP is bound by residues Gly165–Ser172, Phe190–Glu194, Asp211–Gly214, Asn278–Asp281, and Ser306–Ile308. Mg(2+) is bound by residues Ser172 and Thr192.

It belongs to the TRAFAC class OBG-HflX-like GTPase superfamily. OBG GTPase family. Monomer. Mg(2+) is required as a cofactor.

Its subcellular location is the cytoplasm. Its function is as follows. An essential GTPase which binds GTP, GDP and possibly (p)ppGpp with moderate affinity, with high nucleotide exchange rates and a fairly low GTP hydrolysis rate. Plays a role in control of the cell cycle, stress response, ribosome biogenesis and in those bacteria that undergo differentiation, in morphogenesis control. The sequence is that of GTPase Obg from Ehrlichia ruminantium (strain Gardel).